A 218-amino-acid chain; its full sequence is Thyroid hormone receptor alpha (218 aa).

The region spanning 1-215 (PEDIGQSPGV…PPLFLEVFED (215 aa)) is the NR LBD domain. 2 residues coordinate 3,3',5-triiodo-L-thyronine: arginine 36 and serine 85.

This sequence belongs to the nuclear hormone receptor family. NR1 subfamily.

Its subcellular location is the nucleus. In terms of biological role, nuclear hormone receptor that can act as a repressor or activator of transcription. High affinity receptor for thyroid hormones, including triiodothyronine and thyroxine. The sequence is that of Thyroid hormone receptor alpha (thra) from Oncorhynchus mykiss (Rainbow trout).